The sequence spans 209 residues: Glutathione S-transferase 1, isoform C (209 aa).

The GST N-terminal domain occupies 1–80; sequence MDFYYLPGSA…YLAEKYGKDD (80 aa). Glutathione-binding positions include serine 9, 50–52, and 64–66; these read HCI and ESR. The GST C-terminal domain maps to 86-207; it reads DPQKRAVVNQ…AGIEEFKKYF (122 aa).

This sequence belongs to the GST superfamily. Theta family. Homodimer.

The enzyme catalyses RX + glutathione = an S-substituted glutathione + a halide anion + H(+). The catalysed reaction is 1,1,1-trichloro-2,2-bis(4-chlorophenyl)ethane = 1,1-dichloro-2,2-bis(4-chlorophenyl)ethylene + chloride + H(+). Conjugation of reduced glutathione to a wide number of exogenous and endogenous hydrophobic electrophiles. Has DDT dehydrochlorinase activity. This Anopheles gambiae (African malaria mosquito) protein is Glutathione S-transferase 1, isoform C (GstD1).